Consider the following 326-residue polypeptide: Virulence-associated V antigen (326 aa).

It localises to the secreted. Functionally, possibly involved in calcium regulation of YOP expression, which includes the export process. In Yersinia pestis, this protein is Virulence-associated V antigen (lcrV).